The sequence spans 367 residues: Quinolinate synthase (367 aa).

Positions 45 and 62 each coordinate iminosuccinate. [4Fe-4S] cluster is bound at residue Cys109. Iminosuccinate-binding positions include 140 to 142 (YVN) and Ser161. Cys229 contributes to the [4Fe-4S] cluster binding site. Residues 255–257 (HPE) and Thr272 each bind iminosuccinate. A [4Fe-4S] cluster-binding site is contributed by Cys319.

Belongs to the quinolinate synthase family. Type 3 subfamily. It depends on [4Fe-4S] cluster as a cofactor.

The protein localises to the cytoplasm. The enzyme catalyses iminosuccinate + dihydroxyacetone phosphate = quinolinate + phosphate + 2 H2O + H(+). It participates in cofactor biosynthesis; NAD(+) biosynthesis; quinolinate from iminoaspartate: step 1/1. In terms of biological role, catalyzes the condensation of iminoaspartate with dihydroxyacetone phosphate to form quinolinate. This Lysinibacillus sphaericus (strain C3-41) protein is Quinolinate synthase.